A 100-amino-acid chain; its full sequence is SAGA-associated factor 11 (100 aa).

The segment at 73 to 94 (FQCENCGRSIAGGRFAQHMTKC) adopts an SGF11-type zinc-finger fold.

This sequence belongs to the SGF11 family. In terms of assembly, component of the 1.8 MDa SAGA transcription coactivator-HAT complex. SAGA is built of 5 distinct domains with specialized functions. Within the SAGA complex, SUS1, SGF11, SGF73 and UBP8 form an additional subcomplex of SAGA called the DUB module (deubiquitination module). Interacts directly with SGF73, SUS1 and UBP8.

It localises to the nucleus. Its function is as follows. Functions as a component of the transcription regulatory histone acetylation (HAT) complex SAGA. At the promoters, SAGA is required for recruitment of the basal transcription machinery. It influences RNA polymerase II transcriptional activity through different activities such as TBP interaction and promoter selectivity, interaction with transcription activators, and chromatin modification through histone acetylation and deubiquitination. SAGA acetylates nucleosomal histone H3 to some extent (to form H3K9ac, H3K14ac, H3K18ac and H3K23ac). SAGA interacts with DNA via upstream activating sequences (UASs). Involved in transcriptional regulation of a subset of SAGA-regulated genes. Within the SAGA complex, participates in a subcomplex, that specifically deubiquitinates histones H2B. In Debaryomyces hansenii (strain ATCC 36239 / CBS 767 / BCRC 21394 / JCM 1990 / NBRC 0083 / IGC 2968) (Yeast), this protein is SAGA-associated factor 11.